Here is a 187-residue protein sequence, read N- to C-terminus: Putative adenylate kinase (187 aa).

Positions 10, 12, 13, 14, and 15 each coordinate ATP. An NMP region spans residues 30–53 (SLSQFVIENKLYTEYDELRQSYII). Residues 103-113 (GRGWADIKVAE) are LID. Position 104 (Arg104) interacts with ATP.

The protein belongs to the adenylate kinase family. AK6 subfamily. In terms of assembly, interacts with uS11. Not a structural component of 40S pre-ribosomes, but transiently interacts with them by binding to uS11.

The catalysed reaction is AMP + ATP = 2 ADP. It carries out the reaction ATP + H2O = ADP + phosphate + H(+). In terms of biological role, broad-specificity nucleoside monophosphate (NMP) kinase that catalyzes the reversible transfer of the terminal phosphate group between nucleoside triphosphates and monophosphates. Also has ATPase activity. Involved in the late maturation steps of the 30S ribosomal particles, specifically 16S rRNA maturation. While NMP activity is not required for ribosome maturation, ATPase activity is. Associates transiently with small ribosomal subunit protein uS11. ATP hydrolysis breaks the interaction with uS11. May temporarily remove uS11 from the ribosome to enable a conformational change of the ribosomal RNA that is needed for the final maturation step of the small ribosomal subunit. The chain is Putative adenylate kinase from Saccharolobus islandicus (strain M.16.4 / Kamchatka #3) (Sulfolobus islandicus).